Here is a 623-residue protein sequence, read N- to C-terminus: NADPH-dependent diflavin oxidoreductase 1 (623 aa).

In terms of domain architecture, Flavodoxin-like spans 8 to 153 (LLVLYASQTG…TLDPWMLSLW (146 aa)). Residues 14–19 (SQTGNA), 62–65 (STTG), and Asp-135 contribute to the FMN site. In terms of domain architecture, FAD-binding FR-type spans 221–467 (KPDCFLKMTR…SLPAPSQSLP (247 aa)). Residues Arg-369, 399–402 (RAFS), and 433–436 (GLCS) contribute to the FAD site. NADP(+) is bound by residues Thr-475, 541–542 (SR), 547–551 (KVYVQ), and Asp-583. FAD is bound at residue Trp-622.

It belongs to the NADPH-dependent diflavin oxidoreductase NDOR1 family. The protein in the N-terminal section; belongs to the flavodoxin family. This sequence in the C-terminal section; belongs to the flavoprotein pyridine nucleotide cytochrome reductase family. Interacts with At5g18400. FAD serves as cofactor. It depends on FMN as a cofactor. In terms of tissue distribution, widely expressed.

It localises to the cytoplasm. The protein resides in the nucleus. The enzyme catalyses 2 oxidized [2Fe-2S]-[protein] + NADPH = 2 reduced [2Fe-2S]-[protein] + NADP(+) + H(+). Its function is as follows. NADPH-dependent reductase which is a central component of the cytosolic iron-sulfur (Fe-S) protein assembly (CIA) machinery. Transfers electrons from NADPH via its FAD and FMN prosthetic groups to the [2Fe-2S] cluster of the anamorsin/DRE2 homolog, another key component of the CIA machinery. In turn, this reduced cluster provides electrons for assembly of cytosolic iron-sulfur cluster proteins. Catalyzes the NADP-dependent reduction of cytochrome c, but not cytochrome P450 in vitro. Required for embryo development. The chain is NADPH-dependent diflavin oxidoreductase 1 (ATR3) from Arabidopsis thaliana (Mouse-ear cress).